Here is a 143-residue protein sequence, read N- to C-terminus: Putative pre-16S rRNA nuclease (143 aa).

This sequence belongs to the YqgF nuclease family.

The protein localises to the cytoplasm. Functionally, could be a nuclease involved in processing of the 5'-end of pre-16S rRNA. This is Putative pre-16S rRNA nuclease from Mycoplasma capricolum subsp. capricolum (strain California kid / ATCC 27343 / NCTC 10154).